Consider the following 405-residue polypeptide: MTEATSELVIWRNGRLATLNPDHAQPYGLLERHALLVRDGRIAAIVAEDDVPSGRSIDLEGRLVTPGLIDCHTHLVFGGSRAQEWEQRLNGVSYQTISASGGGINSTVRATRDSSEAELLALAQPRLERLLREGVTTLEIKSGYGLDLPNERKMLRVARQLADHNGVELSATLLSAHATPPEYQGDADGYITLVCETILPTLWQEGLFESVDVFCENVGFSPQQTERVFQAAQALGIPVKGHVEQLSSLGGAQLVSRYHGLSADHIEYLTEEGVAAMRESGTVAALLPGAFYFLNETRKPPVELLRKYQVPMAVATDFNPGTSPFASLHLAMNMACVKFGLTPEEAWAGVTRHAARALGRQASHGQLAPGFVANFAIWDAEHPVEMVYEPGRSPLWHRVVQGELQ.

The Fe(3+) site is built by histidine 72 and histidine 74. Zn(2+)-binding residues include histidine 72 and histidine 74. Positions 81, 144, and 177 each coordinate 4-imidazolone-5-propanoate. Tyrosine 144 serves as a coordination point for N-formimidoyl-L-glutamate. Histidine 242 is a binding site for Fe(3+). Histidine 242 lines the Zn(2+) pocket. Glutamine 245 is a binding site for 4-imidazolone-5-propanoate. Aspartate 317 contributes to the Fe(3+) binding site. Residue aspartate 317 coordinates Zn(2+). Asparagine 319 and glycine 321 together coordinate N-formimidoyl-L-glutamate. Threonine 322 serves as a coordination point for 4-imidazolone-5-propanoate.

This sequence belongs to the metallo-dependent hydrolases superfamily. HutI family. It depends on Zn(2+) as a cofactor. Fe(3+) serves as cofactor.

It localises to the cytoplasm. It catalyses the reaction 4-imidazolone-5-propanoate + H2O = N-formimidoyl-L-glutamate. The protein operates within amino-acid degradation; L-histidine degradation into L-glutamate; N-formimidoyl-L-glutamate from L-histidine: step 3/3. Its function is as follows. Catalyzes the hydrolytic cleavage of the carbon-nitrogen bond in imidazolone-5-propanoate to yield N-formimidoyl-L-glutamate. It is the third step in the universal histidine degradation pathway. The chain is Imidazolonepropionase from Klebsiella pneumoniae subsp. pneumoniae (strain ATCC 700721 / MGH 78578).